The primary structure comprises 473 residues: Xylosidase/arabinosidase (473 aa).

Residue D18 is the Proton acceptor of the active site. Residue E209 is the Proton donor of the active site.

Belongs to the glycosyl hydrolase 43 family. In terms of assembly, homotetramer.

It carries out the reaction Hydrolysis of (1-&gt;4)-beta-D-xylans, to remove successive D-xylose residues from the non-reducing termini.. It catalyses the reaction Hydrolysis of terminal non-reducing alpha-L-arabinofuranoside residues in alpha-L-arabinosides.. The polypeptide is Xylosidase/arabinosidase (xylA) (Thermoclostridium stercorarium (Clostridium stercorarium)).